A 210-amino-acid chain; its full sequence is Redox-sensing transcriptional repressor Rex (210 aa).

The H-T-H motif DNA-binding region spans 17 to 56 (SYLHLVKKAEADKLEYISGTVIAEELELEPIQVRKDLTIT). 91-96 (GAGSLG) lines the NAD(+) pocket.

The protein belongs to the transcriptional regulatory Rex family. In terms of assembly, homodimer.

It localises to the cytoplasm. Functionally, modulates transcription in response to changes in cellular NADH/NAD(+) redox state. This chain is Redox-sensing transcriptional repressor Rex, found in Treponema denticola (strain ATCC 35405 / DSM 14222 / CIP 103919 / JCM 8153 / KCTC 15104).